Consider the following 120-residue polypeptide: Aspartate 1-decarboxylase (120 aa).

S25 acts as the Schiff-base intermediate with substrate; via pyruvic acid in catalysis. A Pyruvic acid (Ser) modification is found at S25. Position 57 (T57) interacts with substrate. Y58 serves as the catalytic Proton donor. A substrate-binding site is contributed by 73-75 (GAA).

This sequence belongs to the PanD family. In terms of assembly, heterooctamer of four alpha and four beta subunits. The cofactor is pyruvate. Is synthesized initially as an inactive proenzyme, which is activated by self-cleavage at a specific serine bond to produce a beta-subunit with a hydroxyl group at its C-terminus and an alpha-subunit with a pyruvoyl group at its N-terminus.

The protein localises to the cytoplasm. The enzyme catalyses L-aspartate + H(+) = beta-alanine + CO2. It functions in the pathway cofactor biosynthesis; (R)-pantothenate biosynthesis; beta-alanine from L-aspartate: step 1/1. Its function is as follows. Catalyzes the pyruvoyl-dependent decarboxylation of aspartate to produce beta-alanine. This is Aspartate 1-decarboxylase from Cupriavidus taiwanensis (strain DSM 17343 / BCRC 17206 / CCUG 44338 / CIP 107171 / LMG 19424 / R1) (Ralstonia taiwanensis (strain LMG 19424)).